The chain runs to 80 residues: Nuclear protein 1 (80 aa).

Disordered regions lie at residues 1-21 (MATL…EDED) and 38-80 (VGGG…KAWR). Basic and acidic residues predominate over residues 61 to 80 (GHERKLLTKFQNSERKKAWR). A Nuclear localization signal motif is present at residues 64–80 (RKLLTKFQNSERKKAWR).

It belongs to the NUPR family. Monomer. Directly interacts with MSL1 and binds MORF4L1, two components of histone acetyltransferase complex; the interaction with MORF4L1 may be mediated by MSL1. Interacts with EP300; this interaction enhances the effect of EP300 on PAX2 transcription factor activity. Interacts with PAXIP1; this interaction prevents PAXIP1 inhibition of PAX2 transcription factor activity. Interacts with COPS5; this interaction allows COPS5-dependent CDKN1B nuclear to cytoplasm translocation. Interacts with RNF2. Interacts with FOXO3; this interaction represses FOXO3 transactivation. Interacts with PTMA; regulates apoptotic process. Interacts with MYOD1, EP300 and DDX5; this interaction coordinates the association of anti-proliferative and pro-myogenic proteins at the myogenin promoter. Interacts with TP53; interaction is stress-dependent. Forms a complex with EP300 and TP53; this complex binds CDKN1A promoter leading to transcriptional induction of CDKN1A. In terms of processing, phosphorylated. Phosphorylation promotes DNA-binding activity. Acetylated. In terms of tissue distribution, highly expressed in pancreas and both ovaries and testes.

The protein localises to the nucleus. The protein resides in the cytoplasm. It localises to the perinuclear region. Functionally, transcription regulator that converts stress signals into a program of gene expression that empowers cells with resistance to the stress induced by a change in their microenvironment. Thereby participates in the regulation of many processes namely cell-cycle, apoptosis, autophagy and DNA repair responses. Controls cell cycle progression and protects cells from genotoxic stress induced by doxorubicin through the complex formation with TP53 and EP300 that binds CDKN1A promoter leading to transcriptional induction of CDKN1A. Protects pancreatic cancer cells from stress-induced cell death by binding the RELB promoter and activating its transcription, leading to IER3 transactivation. Negatively regulates apoptosis through interaction with PTMA. Inhibits autophagy-induced apoptosis in cardiac cells through FOXO3 interaction, inducing cytoplasmic translocation of FOXO3 thereby preventing the FOXO3 association with the pro-autophagic BNIP3 promoter. Inhibits cell growth and facilitates programmed cell death by apoptosis after adriamycin-induced DNA damage through transactivation of TP53. Regulates methamphetamine-induced apoptosis and autophagy through DDIT3-mediated endoplasmic reticulum stress pathway. Participates in DNA repair following gamma-irradiation by facilitating DNA access of the transcription machinery through interaction with MSL1 leading to inhibition of histone H4' Lys-16' acetylation (H4K16ac). Coactivator of PAX2 transcription factor activity, both by recruiting the EP300 cofactor to increase PAX2 transcription factor activity and by binding PAXIP1 to suppress PAXIP1-induced inhibition on PAX2. Positively regulates cell cycle progression through interaction with COPS5 inducing cytoplasmic translocation of CDKN1B leading to the CDKN1B degradation. Coordinates, through its interaction with EP300, the assiociation of MYOD1, EP300 and DDX5 to the MYOG promoter, leading to inhibition of cell-cycle progression and myogenic differentiation promotion. Negatively regulates beta cell proliferation via inhibition of cell-cycle regulatory genes expression through the suppression of their promoter activities. Also required for LHB expression and ovarian maturation. Exacerbates CNS inflammation and demyelination upon cuprizone treatment. The sequence is that of Nuclear protein 1 from Mus musculus (Mouse).